The primary structure comprises 122 residues: Sarcocystatin-A (122 aa).

The N-terminal stretch at 1–20 (MKYVLILCVITLATVAYAQP) is a signal peptide. Q21 bears the Pyrrolidone carboxylic acid mark. Residues 67–71 (QVVSG) carry the Secondary area of contact motif.

This sequence belongs to the cystatin family.

Selectively inhibits the activity of cysteine proteinase of hemocytes, protecting developing adult tissue in pupae from attack by the proteinase. This is Sarcocystatin-A from Sarcophaga peregrina (Flesh fly).